Here is a 315-residue protein sequence, read N- to C-terminus: Secreted mono- and diacylglycerol lipase LIP2 (315 aa).

A signal peptide spans 1–21 (MACFRVILYLSVIFFVQCVFA). A disulfide bond links cysteine 68 and cysteine 308. N-linked (GlcNAc...) asparagine glycosylation occurs at asparagine 74. Serine 182 functions as the Nucleophile in the catalytic mechanism. The active site involves aspartate 240. Residue asparagine 265 is glycosylated (N-linked (GlcNAc...) asparagine). The active site involves histidine 292.

It belongs to the AB hydrolase superfamily. Lipase family. Class 3 subfamily.

The protein localises to the secreted. It catalyses the reaction a monoacylglycerol + H2O = glycerol + a fatty acid + H(+). The catalysed reaction is a diacylglycerol + H2O = a monoacylglycerol + a fatty acid + H(+). Functionally, secreted lipase involved in Dandruff and seborrheic dermatitis (D/SD) probably via lipase-mediated breakdown of sebaceous lipids and release of irritating free fatty acids. Shows activity against monoglyceride and diglyceride substrates and generates free oleic acid from the substrates mono- and diolein. Able to cleave the oleic acid from both the 1 and the 2 position of the glycerol backbone as 1,2 isomers of diolein were converted into oleic acid and glycerol. Due to an absence of fatty acid synthase genes in Malassezia species, secretory lipases are essential for the yeast to generate free fatty acids from degradation of sebum and assimilate them as lipid sources for growth. Plays an essential role at the pathogen-host interface during disease progression. Also performs the reverse reaction to build diacylglycerols from monoacylglycerols. This is Secreted mono- and diacylglycerol lipase LIP2 from Malassezia restricta (strain ATCC 96810 / NBRC 103918 / CBS 7877) (Seborrheic dermatitis infection agent).